A 305-amino-acid chain; its full sequence is Cbb3-type cytochrome c oxidase subunit CcoP2 (305 aa).

Helical transmembrane passes span 4 to 24 (FWSW…VWLL) and 57 to 77 (WWFM…VLYP). Cytochrome c domains are found at residues 130-209 (QALK…RSLS) and 219-300 (VDIE…YSLS). Residues C143, C146, H147, M186, C232, C235, H236, and M277 each coordinate heme c.

In terms of assembly, component of the cbb3-type cytochrome c oxidase at least composed of CcoN, CcoO, CcoQ and CcoP. Requires heme c as cofactor.

It localises to the cell inner membrane. Its pathway is energy metabolism; oxidative phosphorylation. Its function is as follows. C-type cytochrome. Part of the cbb3-type cytochrome c oxidase complex. CcoP subunit is required for transferring electrons from donor cytochrome c via its heme groups to CcoO subunit. From there, electrons are shuttled to the catalytic binuclear center of CcoN subunit where oxygen reduction takes place. The complex also functions as a proton pump. This is Cbb3-type cytochrome c oxidase subunit CcoP2 from Stutzerimonas stutzeri (Pseudomonas stutzeri).